The sequence spans 125 residues: uncharacterized protein (125 aa).

A Cupin type-2 domain is found at 45 to 110 (IVPVGSKTLL…IGNVPLKILC (66 aa)).

This is an uncharacterized protein from Methanocaldococcus jannaschii (strain ATCC 43067 / DSM 2661 / JAL-1 / JCM 10045 / NBRC 100440) (Methanococcus jannaschii).